Reading from the N-terminus, the 110-residue chain is AQVINTFDGVADYLLTYHKLPDNYITKSEAQALGWVASKGNLADVAPGKSIGGDIFSNREGKLPAKSGRTWREADINYTSGFRNSDRILYSSDWLIYKTTDHYKTFTKIR.

Glu73 acts as the Proton acceptor in catalysis. His102 (proton donor) is an active-site residue.

This sequence belongs to the ribonuclease N1/T1 family.

Its subcellular location is the secreted. In terms of biological role, hydrolyzes phosphodiester bonds in RNA, poly- and oligoribonucleotides resulting in 3'-nucleoside monophosphates via 2',3'-cyclophosphate intermediates. This chain is Ribonuclease, found in Niallia circulans (Bacillus circulans).